The sequence spans 607 residues: Elongation factor 4 (607 aa).

A tr-type G domain is found at 11 to 193; the sequence is EKIRNFSIIA…QIVEKVPAPT (183 aa). GTP is bound by residues 23–28 and 140–143; these read DHGKST and NKID.

Belongs to the TRAFAC class translation factor GTPase superfamily. Classic translation factor GTPase family. LepA subfamily.

It localises to the cell membrane. The enzyme catalyses GTP + H2O = GDP + phosphate + H(+). Required for accurate and efficient protein synthesis under certain stress conditions. May act as a fidelity factor of the translation reaction, by catalyzing a one-codon backward translocation of tRNAs on improperly translocated ribosomes. Back-translocation proceeds from a post-translocation (POST) complex to a pre-translocation (PRE) complex, thus giving elongation factor G a second chance to translocate the tRNAs correctly. Binds to ribosomes in a GTP-dependent manner. This Streptococcus pneumoniae serotype 19F (strain G54) protein is Elongation factor 4.